The chain runs to 93 residues: RNA-binding protein Hfq (93 aa).

Positions 11 to 71 constitute a Sm domain; the sequence is DVFLNHVRKS…ISTVMPGAPI (61 aa).

This sequence belongs to the Hfq family. As to quaternary structure, homohexamer.

In terms of biological role, RNA chaperone that binds small regulatory RNA (sRNAs) and mRNAs to facilitate mRNA translational regulation in response to envelope stress, environmental stress and changes in metabolite concentrations. Also binds with high specificity to tRNAs. The protein is RNA-binding protein Hfq of Granulibacter bethesdensis (strain ATCC BAA-1260 / CGDNIH1).